A 185-amino-acid polypeptide reads, in one-letter code: Ribosome-recycling factor (185 aa).

It belongs to the RRF family.

The protein resides in the cytoplasm. Responsible for the release of ribosomes from messenger RNA at the termination of protein biosynthesis. May increase the efficiency of translation by recycling ribosomes from one round of translation to another. This is Ribosome-recycling factor from Shewanella pealeana (strain ATCC 700345 / ANG-SQ1).